Consider the following 623-residue polypeptide: NAD-dependent malic enzyme 1, mitochondrial (623 aa).

A mitochondrion-targeting transit peptide spans 1–38; the sequence is MGIANKLRLSSSSLSRILHRRILYSSAVRSFTTSEGHR. Residue Tyr-143 is the Proton donor of the active site. Arg-196 is an NAD(+) binding site. Lys-214 functions as the Proton acceptor in the catalytic mechanism. A divalent metal cation-binding residues include Glu-285, Asp-286, and Asp-309. Positions 309 and 464 each coordinate NAD(+).

This sequence belongs to the malic enzymes family. In terms of assembly, homodimer. Heterodimer of two related subunits in NAD-MEH complex. Interacts with NAD-ME2. Mg(2+) is required as a cofactor. Mn(2+) serves as cofactor. In terms of tissue distribution, expressed in leaves, stems, flowers, and roots (at protein level).

It localises to the mitochondrion. The catalysed reaction is (S)-malate + NAD(+) = pyruvate + CO2 + NADH. With respect to regulation, activated by oxaloacetate (OAA), 2-ketoglutarate, succinate and fumarate as homodimer and by OAA, 2-ketoglutarate, succinate, fumarate and coenzyme A (acetyl-CoA and CoA) as heterodimer NAD-MEH. Functionally, involved in the regulation of sugars and amino acids metabolisms during the night period. The chain is NAD-dependent malic enzyme 1, mitochondrial (NAD-ME1) from Arabidopsis thaliana (Mouse-ear cress).